The chain runs to 281 residues: Probable protein phosphatase 2C 9 (281 aa).

One can recognise a PPM-type phosphatase domain in the interval 33-280 (KYGFSLVKGK…DDISCVVVRF (248 aa)). Mn(2+)-binding residues include aspartate 70, glycine 71, aspartate 232, and aspartate 271.

The protein belongs to the PP2C family. Interacts with phytochromes (via N-terminus). The cofactor is Mg(2+). It depends on Mn(2+) as a cofactor.

It is found in the nucleus. It carries out the reaction O-phospho-L-seryl-[protein] + H2O = L-seryl-[protein] + phosphate. The enzyme catalyses O-phospho-L-threonyl-[protein] + H2O = L-threonyl-[protein] + phosphate. In terms of biological role, involved in the regulation of phytochrome signaling. May regulate phytochrome-interacting factor 3 (PIF3) through the dephosphorylation of phytochrome. The protein is Probable protein phosphatase 2C 9 of Arabidopsis thaliana (Mouse-ear cress).